Consider the following 140-residue polypeptide: Small ribosomal subunit protein bS6 (140 aa).

A disordered region spans residues 96–140 (VTGQSEMLKAEENRSERRERRERPENAESNDGDDSDSNDSDNADE). The segment covering 103–121 (LKAEENRSERRERRERPEN) has biased composition (basic and acidic residues). A compositionally biased stretch (acidic residues) spans 123–140 (ESNDGDDSDSNDSDNADE).

It belongs to the bacterial ribosomal protein bS6 family.

Its function is as follows. Binds together with bS18 to 16S ribosomal RNA. The sequence is that of Small ribosomal subunit protein bS6 from Ectopseudomonas mendocina (strain ymp) (Pseudomonas mendocina).